The sequence spans 584 residues: Beta-(1--&gt;2)glucan export ATP-binding/permease protein NdvA (584 aa).

Residues 21–301 (VSLVVAANII…MRQFSTQIFE (281 aa)) form the ABC transmembrane type-1 domain. Helical transmembrane passes span 29–49 (IILA…IDAI), 57–77 (DILF…VLVA), 136–156 (THLA…SMDV), 158–178 (LTLV…MVMD), 248–268 (IAST…VQSG), and 272–292 (VGDV…LDQM). In terms of domain architecture, ABC transporter spans 335 to 569 (VEFRHVSFDF…GGRFAALLHT (235 aa)). Residue 368-375 (GPTGAGKT) coordinates ATP.

This sequence belongs to the ABC transporter superfamily. Beta-(1--&gt;2)glucan exporter (TC 3.A.1.108.1) family. In terms of assembly, homodimer.

The protein localises to the cell inner membrane. The enzyme catalyses [(1-&gt;2)-beta-D-glucosyl](n)(in) + ATP + H2O = [(1-&gt;2)-beta-D-glucosyl](n)(out) + ADP + phosphate + H(+). Its function is as follows. Involved in beta-(1--&gt;2)glucan export. Transmembrane domains (TMD) form a pore in the inner membrane and the ATP-binding domain (NBD) is responsible for energy generation. The protein is Beta-(1--&gt;2)glucan export ATP-binding/permease protein NdvA of Agrobacterium vitis (Rhizobium vitis).